The chain runs to 508 residues: Photosystem II CP47 reaction center protein (508 aa).

6 helical membrane passes run 21 to 36, 101 to 115, 140 to 156, 203 to 218, 237 to 252, and 457 to 472; these read SVHIMHTALVAGWAGS, IVFSGLCFLAAIWHW, GIHLFLSGVACFGFGAF, IAAGTLGILAGLFHLS, VLSSSIAAVFFAAFVV, and SFALLFFFGHIWHGAR.

It belongs to the PsbB/PsbC family. PsbB subfamily. In terms of assembly, PSII is composed of 1 copy each of membrane proteins PsbA, PsbB, PsbC, PsbD, PsbE, PsbF, PsbH, PsbI, PsbJ, PsbK, PsbL, PsbM, PsbT, PsbX, PsbY, PsbZ, Psb30/Ycf12, at least 3 peripheral proteins of the oxygen-evolving complex and a large number of cofactors. It forms dimeric complexes. Requires Binds multiple chlorophylls. PSII binds additional chlorophylls, carotenoids and specific lipids. as cofactor.

The protein localises to the plastid. Its subcellular location is the chloroplast thylakoid membrane. Functionally, one of the components of the core complex of photosystem II (PSII). It binds chlorophyll and helps catalyze the primary light-induced photochemical processes of PSII. PSII is a light-driven water:plastoquinone oxidoreductase, using light energy to abstract electrons from H(2)O, generating O(2) and a proton gradient subsequently used for ATP formation. This chain is Photosystem II CP47 reaction center protein, found in Manihot esculenta (Cassava).